The primary structure comprises 415 residues: Arrestin domain-containing protein 4 (415 aa).

2 short sequence motifs (PPxY motif) span residues 347 to 350 and 392 to 395; these read PPNY and PPLY.

It belongs to the arrestin family. As to quaternary structure, interacts with ADRB2. Interacts (via PPxY motifs) with ITCH, NEDD4L and WWP2. Interacts with AVPR2. Identified in a complex containing at least ARRDC4, AVPR2 and HGS. Interacts with SLC11A2; controls the incorporation of SLC11A2 into extracellular vesicles through an ubiquitination-dependent mechanism. Interacts with TRIM65.

It is found in the early endosome. The protein localises to the cell membrane. It localises to the cytoplasmic vesicle. Functionally, functions as an adapter recruiting ubiquitin-protein ligases to their specific substrates. Plays a role in endocytosis of activated G protein-coupled receptors (GPCRs). Through an ubiquitination-dependent mechanism also plays a role in the incorporation of SLC11A2 into extracellular vesicles. May play a role in glucose uptake. Participates in innate immune response by promoting IFIH1/MDA5 activation through interaction with TRIM65. In Mus musculus (Mouse), this protein is Arrestin domain-containing protein 4.